The sequence spans 532 residues: Eukaryotic translation initiation factor 3 subunit D (532 aa).

Residues 108–161 (ATVLKTRGGAPRGGSFAGRGGSQRGGRFQNQPGRGPVGGQRGPNPRFGKSKFGW) are disordered. Positions 117–131 (APRGGSFAGRGGSQR) are enriched in gly residues. A compositionally biased stretch (low complexity) spans 132–141 (GGRFQNQPGR). The RNA gate stretch occupies residues 296 to 310 (PLDFITVDENAADPP).

Belongs to the eIF-3 subunit D family. As to quaternary structure, component of the eukaryotic translation initiation factor 3 (eIF-3) complex.

The protein localises to the cytoplasm. In terms of biological role, mRNA cap-binding component of the eukaryotic translation initiation factor 3 (eIF-3) complex, which is involved in protein synthesis of a specialized repertoire of mRNAs and, together with other initiation factors, stimulates binding of mRNA and methionyl-tRNAi to the 40S ribosome. The eIF-3 complex specifically targets and initiates translation of a subset of mRNAs involved in cell proliferation. In the eIF-3 complex, eif3d specifically recognizes and binds the 7-methylguanosine cap of a subset of mRNAs. This Yarrowia lipolytica (strain CLIB 122 / E 150) (Yeast) protein is Eukaryotic translation initiation factor 3 subunit D.